The primary structure comprises 693 residues: UvrABC system protein C (693 aa).

The GIY-YIG domain occupies 16 to 95 (DAPGVYRFRD…IKEFDPRFNV (80 aa)). The region spanning 208-243 (GVFLRRLESEMAAASAELDFERAARVRDDINALRRV) is the UVR domain. Residues 656-693 (APSPDDATTEPGAVGEPGTADGAAADPDGRDAVVVPEG) are disordered. The span at 672–693 (PGTADGAAADPDGRDAVVVPEG) shows a compositional bias: low complexity.

It belongs to the UvrC family. In terms of assembly, interacts with UvrB in an incision complex.

The protein localises to the cytoplasm. Its function is as follows. The UvrABC repair system catalyzes the recognition and processing of DNA lesions. UvrC both incises the 5' and 3' sides of the lesion. The N-terminal half is responsible for the 3' incision and the C-terminal half is responsible for the 5' incision. In Beutenbergia cavernae (strain ATCC BAA-8 / DSM 12333 / CCUG 43141 / JCM 11478 / NBRC 16432 / NCIMB 13614 / HKI 0122), this protein is UvrABC system protein C.